The chain runs to 283 residues: Elongation factor Ts (283 aa).

The tract at residues 80–83 (TDFV) is involved in Mg(2+) ion dislocation from EF-Tu.

Belongs to the EF-Ts family.

The protein resides in the cytoplasm. In terms of biological role, associates with the EF-Tu.GDP complex and induces the exchange of GDP to GTP. It remains bound to the aminoacyl-tRNA.EF-Tu.GTP complex up to the GTP hydrolysis stage on the ribosome. The sequence is that of Elongation factor Ts from Pectobacterium carotovorum subsp. carotovorum (strain PC1).